We begin with the raw amino-acid sequence, 382 residues long: uncharacterized protein (382 aa).

The next 12 membrane-spanning stretches (helical) occupy residues 14–34 (GLLL…LWLA), 45–65 (VVSS…GYVI), 79–99 (FIFA…SWLA), 102–122 (FVAG…LMCS), 131–151 (LLAA…LLVS), 157–177 (LMSV…PLLF), 204–224 (LGVN…GLMP), 235–255 (ASIG…QWPI), 270–290 (VQVF…AMAP), 291–311 (ALFI…AWAC), 325–345 (ALLL…AMLM), and 348–368 (FSDN…LLML).

Belongs to the major facilitator superfamily. YcaD (TC 2.A.1.26) family.

It localises to the cell inner membrane. This is an uncharacterized protein from Shigella sonnei (strain Ss046).